The following is a 505-amino-acid chain: Glutamate--tRNA ligase (505 aa).

Positions proline 12–glycine 22 match the 'HIGH' region motif. A 'KMSKS' region motif is present at residues lysine 260 to arginine 264. Lysine 263 provides a ligand contact to ATP.

Belongs to the class-I aminoacyl-tRNA synthetase family. Glutamate--tRNA ligase type 1 subfamily. Monomer.

Its subcellular location is the cytoplasm. The catalysed reaction is tRNA(Glu) + L-glutamate + ATP = L-glutamyl-tRNA(Glu) + AMP + diphosphate. Functionally, catalyzes the attachment of glutamate to tRNA(Glu) in a two-step reaction: glutamate is first activated by ATP to form Glu-AMP and then transferred to the acceptor end of tRNA(Glu). The sequence is that of Glutamate--tRNA ligase from Parabacteroides distasonis (strain ATCC 8503 / DSM 20701 / CIP 104284 / JCM 5825 / NCTC 11152).